Reading from the N-terminus, the 100-residue chain is Small ribosomal subunit protein uS14c (100 aa).

This sequence belongs to the universal ribosomal protein uS14 family. Part of the 30S ribosomal subunit.

It is found in the plastid. The protein resides in the chloroplast. Binds 16S rRNA, required for the assembly of 30S particles. The protein is Small ribosomal subunit protein uS14c of Oedogonium cardiacum (Filamentous green alga).